The sequence spans 87 residues: Small ribosomal subunit protein uS15 (87 aa).

Residues 1–22 (MSEINKAEIVASNARAPSDTGS) form a disordered region.

This sequence belongs to the universal ribosomal protein uS15 family. In terms of assembly, part of the 30S ribosomal subunit. Forms a bridge to the 50S subunit in the 70S ribosome, contacting the 23S rRNA.

One of the primary rRNA binding proteins, it binds directly to 16S rRNA where it helps nucleate assembly of the platform of the 30S subunit by binding and bridging several RNA helices of the 16S rRNA. Functionally, forms an intersubunit bridge (bridge B4) with the 23S rRNA of the 50S subunit in the ribosome. The polypeptide is Small ribosomal subunit protein uS15 (Leptothrix cholodnii (strain ATCC 51168 / LMG 8142 / SP-6) (Leptothrix discophora (strain SP-6))).